Here is a 132-residue protein sequence, read N- to C-terminus: Small ribosomal subunit protein uS11 (132 aa).

It belongs to the universal ribosomal protein uS11 family. In terms of assembly, part of the 30S ribosomal subunit. Interacts with proteins S7 and S18. Binds to IF-3.

Located on the platform of the 30S subunit, it bridges several disparate RNA helices of the 16S rRNA. Forms part of the Shine-Dalgarno cleft in the 70S ribosome. The sequence is that of Small ribosomal subunit protein uS11 from Cyanothece sp. (strain PCC 7425 / ATCC 29141).